The sequence spans 442 residues: tRNA modification GTPase MnmE (442 aa).

The (6S)-5-formyl-5,6,7,8-tetrahydrofolate site is built by Arg22, Glu79, and Lys119. Residues Gly216–Ala366 form the TrmE-type G domain. Residue Asn226 coordinates K(+). Residues Asn226–Ser231, Ser245–Thr251, and Asp270–Gly273 each bind GTP. Ser230 serves as a coordination point for Mg(2+). K(+) is bound by residues Ser245, Ile247, and Thr250. Residue Thr251 coordinates Mg(2+). Lys442 contacts (6S)-5-formyl-5,6,7,8-tetrahydrofolate.

The protein belongs to the TRAFAC class TrmE-Era-EngA-EngB-Septin-like GTPase superfamily. TrmE GTPase family. In terms of assembly, homodimer. Heterotetramer of two MnmE and two MnmG subunits. K(+) is required as a cofactor.

It localises to the cytoplasm. Functionally, exhibits a very high intrinsic GTPase hydrolysis rate. Involved in the addition of a carboxymethylaminomethyl (cmnm) group at the wobble position (U34) of certain tRNAs, forming tRNA-cmnm(5)s(2)U34. The polypeptide is tRNA modification GTPase MnmE (Mesomycoplasma hyopneumoniae (strain 232) (Mycoplasma hyopneumoniae)).